A 151-amino-acid polypeptide reads, in one-letter code: MPVDPEKLAKLQQGAAKKVGGQRVKAKKVKSEQDDTKLMEALGKLKATKVNAVEEANFFKEDGKVLHFKRVGVQSAAQHNVCAFTGYPQEKDVTQLIPQILPQLGAENLEILRQLAEQIQAGKTPSMGGENAGADEDIPDLIEGQKFDEVE.

The 66-residue stretch at 32–97 (EQDDTKLMEA…PQEKDVTQLI (66 aa)) folds into the NAC-A/B domain. The interval 122-151 (GKTPSMGGENAGADEDIPDLIEGQKFDEVE) is disordered.

The protein belongs to the NAC-beta family. In terms of assembly, part of the nascent polypeptide-associated complex (NAC), consisting of EGD2 and EGD1. NAC associates with ribosomes via EGD1.

It localises to the cytoplasm. The protein localises to the nucleus. Its function is as follows. Component of the nascent polypeptide-associated complex (NAC), a dynamic component of the ribosomal exit tunnel, protecting the emerging polypeptides from interaction with other cytoplasmic proteins to ensure appropriate nascent protein targeting. The NAC complex also promotes mitochondrial protein import by enhancing productive ribosome interactions with the outer mitochondrial membrane and blocks the inappropriate interaction of ribosomes translating non-secretory nascent polypeptides with translocation sites in the membrane of the endoplasmic reticulum. EGD1 may act as a transcription factor that exert a negative effect on the expression of several genes that are transcribed by RNA polymerase II. The polypeptide is Nascent polypeptide-associated complex subunit beta (EGD1) (Meyerozyma guilliermondii (strain ATCC 6260 / CBS 566 / DSM 6381 / JCM 1539 / NBRC 10279 / NRRL Y-324) (Yeast)).